Reading from the N-terminus, the 279-residue chain is Putative ABC transporter ATP-binding protein CA_C1368 (279 aa).

Residues I4 to R239 enclose the ABC transporter domain. G37–S44 serves as a coordination point for ATP.

Belongs to the ABC transporter superfamily.

The protein resides in the cell membrane. Functionally, probably part of an ABC transporter complex. Responsible for energy coupling to the transport system. The chain is Putative ABC transporter ATP-binding protein CA_C1368 from Clostridium acetobutylicum (strain ATCC 824 / DSM 792 / JCM 1419 / IAM 19013 / LMG 5710 / NBRC 13948 / NRRL B-527 / VKM B-1787 / 2291 / W).